A 550-amino-acid polypeptide reads, in one-letter code: Glucose-6-phosphate isomerase (550 aa).

E356 (proton donor) is an active-site residue. Catalysis depends on residues H387 and K515.

Belongs to the GPI family.

The protein localises to the cytoplasm. It carries out the reaction alpha-D-glucose 6-phosphate = beta-D-fructose 6-phosphate. It participates in carbohydrate biosynthesis; gluconeogenesis. It functions in the pathway carbohydrate degradation; glycolysis; D-glyceraldehyde 3-phosphate and glycerone phosphate from D-glucose: step 2/4. Catalyzes the reversible isomerization of glucose-6-phosphate to fructose-6-phosphate. The chain is Glucose-6-phosphate isomerase from Vibrio vulnificus (strain YJ016).